The following is a 385-amino-acid chain: Glutamate 5-kinase (385 aa).

Residue Lys-17 participates in ATP binding. 3 residues coordinate substrate: Ser-64, Asp-151, and Asn-165. 185 to 186 lines the ATP pocket; sequence SD. The region spanning 291–367 is the PUA domain; that stretch reads SGTVRVDAGA…DQIENVLGYS (77 aa).

The protein belongs to the glutamate 5-kinase family.

The protein resides in the cytoplasm. It catalyses the reaction L-glutamate + ATP = L-glutamyl 5-phosphate + ADP. The protein operates within amino-acid biosynthesis; L-proline biosynthesis; L-glutamate 5-semialdehyde from L-glutamate: step 1/2. Catalyzes the transfer of a phosphate group to glutamate to form L-glutamate 5-phosphate. This Methanosarcina mazei (strain ATCC BAA-159 / DSM 3647 / Goe1 / Go1 / JCM 11833 / OCM 88) (Methanosarcina frisia) protein is Glutamate 5-kinase.